Consider the following 113-residue polypeptide: Transcriptional activator RamA (113 aa).

The 99-residue stretch at 9–107 folds into the HTH araC/xylS-type domain; it reads DTIVEWIDDN…HQPPGAYRKE (99 aa). 2 DNA-binding regions (H-T-H motif) span residues 26-47 and 74-97; these read EDIA…LQYK and VYEI…TRTF.

In terms of biological role, probable transcriptional activator. The chain is Transcriptional activator RamA (ramA) from Enterobacter cloacae.